The following is a 212-amino-acid chain: External core antigen (212 aa).

The first 19 residues, 1–19 (MQLFHLCLIIFCSCPTVQA), serve as a signal peptide directing secretion. The tract at residues 25–27 (GWL) is HBEAG. Residues 165 to 212 (NAPILSTLPETTVVRQRGRAPRRRTPSPRRRRSQSPRRRRSQSPASQC) form a disordered region. Over residues 180 to 205 (QRGRAPRRRTPSPRRRRSQSPRRRRS) the composition is skewed to basic residues. Residues 184-190 (APRRRTP) form a 1; half-length repeat. Residues 184-206 (APRRRTPSPRRRRSQSPRRRRSQ) form a 3 X 8 AA repeats of S-P-R-R-R-R-S-Q region. The propeptide occupies 184–212 (APRRRTPSPRRRRSQSPRRRRSQSPASQC). A run of 2 repeats spans residues 191-198 (SPRRRRSQ) and 199-206 (SPRRRRSQ).

The protein belongs to the orthohepadnavirus precore antigen family. Homodimerizes. Post-translationally, phosphorylated. Cleaved by host furin.

The protein localises to the secreted. It localises to the host nucleus. Functionally, may regulate immune response to the intracellular capsid in acting as a T-cell tolerogen, by having an immunoregulatory effect which prevents destruction of infected cells by cytotoxic T-cells. This immune regulation may predispose to chronicity during perinatal infections and prevent severe liver injury during adult infections. This Hepatitis B virus genotype H subtype adw4 (isolate Nicaragua/2928Nic/1997) (HBV-H) protein is External core antigen.